Here is a 569-residue protein sequence, read N- to C-terminus: Retrotransposon Gag-like protein 5 (569 aa).

Disordered regions lie at residues 115-151 and 323-506; these read DGPADPPLLPIPPPPALPPPASKEPPPQPPLAPLERP and RNII…PSRR. Residues 117 to 146 are compositionally biased toward pro residues; sequence PADPPLLPIPPPPALPPPASKEPPPQPPLA. Over residues 334–350 the composition is skewed to acidic residues; that stretch reads NEEESEDEEYYSEDEDQ. Residues 353–367 are compositionally biased toward basic residues; that stretch reads RRHRLHSKDQRKRMR. Composition is skewed to basic and acidic residues over residues 372 to 392 and 401 to 415; these read EMKEKEEEEMKKEEEMKKKEE and MKQKEEEEEIRNKNE. Composition is skewed to acidic residues over residues 416–429 and 443–469; these read EEGESKDEEDEDED and GTEETYGEVEEEPLDEAQDDDLDELME. Over residues 476-485 the composition is skewed to polar residues; the sequence is HASSQTSGPT.

The protein is Retrotransposon Gag-like protein 5 of Homo sapiens (Human).